The sequence spans 384 residues: MAKHLFTSESVSEGHPDKIADQISDAVLDAILEQDPKARVACETYVKTGMVMVGGEITTSAWVDIEELTRETVREIGYVHSDMGFDANSCAVLNTIGKQSPDINQGVDKADPKEQGAGDQGIMFGYACNETEVLMPAPITYSHRLVEKQAEVRKNGTLPWLRPDAKSQVTFQYDQGKIVGIDAVVLSTQHCDSISTPDLREAVMEEIIKPVLPAEWISKDTNFFINPTGRFVIGGPMGDCGLTGRKIIVDTYGGAARHGGGAFSGKDPSKVDRSAAYAARYVAKNIVAAGMADRCEIQLSYAIGVADPTSIMVETFGTEKVSHDIIIEAVRQFFDLRPYGLQEMLNLLQPIYKKTAAYGHFGREEFPWEATDKAELLRDFAGIK.

His-15 lines the ATP pocket. Asp-17 lines the Mg(2+) pocket. Residue Glu-43 coordinates K(+). Residues Glu-56 and Gln-99 each contribute to the L-methionine site. Residues 99-109 form a flexible loop region; the sequence is QSPDINQGVDK. ATP contacts are provided by residues 164–166, 230–231, Asp-239, 245–246, Ala-262, and Lys-266; these read DAK, RF, and RK. Asp-239 contributes to the L-methionine binding site. Position 270 (Lys-270) interacts with L-methionine.

Belongs to the AdoMet synthase family. As to quaternary structure, homotetramer; dimer of dimers. Requires Mg(2+) as cofactor. K(+) serves as cofactor.

It localises to the cytoplasm. It carries out the reaction L-methionine + ATP + H2O = S-adenosyl-L-methionine + phosphate + diphosphate. Its pathway is amino-acid biosynthesis; S-adenosyl-L-methionine biosynthesis; S-adenosyl-L-methionine from L-methionine: step 1/1. Catalyzes the formation of S-adenosylmethionine (AdoMet) from methionine and ATP. The overall synthetic reaction is composed of two sequential steps, AdoMet formation and the subsequent tripolyphosphate hydrolysis which occurs prior to release of AdoMet from the enzyme. This is S-adenosylmethionine synthase from Vibrio parahaemolyticus serotype O3:K6 (strain RIMD 2210633).